The following is a 92-amino-acid chain: Arrestin-C (92 aa).

It belongs to the arrestin family. In terms of assembly, homodimer; disulfide-linked in response to retinal illumination. Interacts with CXCR4; the interaction is dependent on the C-terminal phosphorylation of CXCR4 and modulates the calcium ion mobilization activity of CXCR4. Interacts with GPR84. As to expression, retina and pineal gland.

Its subcellular location is the photoreceptor inner segment. The protein resides in the cell projection. It is found in the cilium. It localises to the photoreceptor outer segment. Functionally, may play a role in an as yet undefined retina-specific signal transduction. Could bind to photoactivated-phosphorylated red/green opsins. This Rattus norvegicus (Rat) protein is Arrestin-C (Arr3).